The sequence spans 499 residues: Lysine--tRNA ligase (499 aa).

Positions 408 and 415 each coordinate Mg(2+).

The protein belongs to the class-II aminoacyl-tRNA synthetase family. In terms of assembly, homodimer. Mg(2+) serves as cofactor.

The protein resides in the cytoplasm. It catalyses the reaction tRNA(Lys) + L-lysine + ATP = L-lysyl-tRNA(Lys) + AMP + diphosphate. In Bacillus cereus (strain ATCC 10987 / NRS 248), this protein is Lysine--tRNA ligase.